The sequence spans 1000 residues: MNFSPLPNRVIDAPKHLKTRMIQVRSSYFGYSLVIRPTSIFVGAPRAQSTLESQGSINETGAVYRCPLASGSCSHYVLNDKLNKQFQWLGGSMDGGTKDTDKLLVCAPRFFVPKNKNYGQMRGICYWVRDTVADTPPLSDVRTISLIPSQAEEHFMLELGLSAHVTDDNSGFLIGAPGVRSWKGSVLVHRGEDLAAQGSYAVKMLDSWDWVKNHFTYVGYALSSGYFSSNNRTSLLYVTTAPSSVLNTGKAYIFDVVGEIVRKLHVFHGEQLGEYFGYSVVAEDLNGDGLTDVVVSAPLNALGDSYDVGAIYVFINKGLFKFEKKIIRLPLSSGARFGSSLSKVGDINHDGYNDLAVGAPFAGNGAVFIFLGSEHGLRDEPSQRLDAPSREPGPYGAHMFGQGLSRGSDIDGNGFNDLAIGAPGAEAVYLYRAYPVVKIHATVRSESRAIRPEQETITVTACYRLETTSKARQMQQQELTFRMTIDELLQRVSFAPMRTNEVSFQAQAGLSGSCRNFSVGVHYTGGIFTPIDLELHYELAKKIPHSHEAFCESCAVVDPLEPKYATGTLSFMTGCAAHVCVSDLQLSSKDVNSSFIFGSLEVLSFSYEITNSGEPAYVAQFNVTSSARLPFAKVPGNCRVRHEVMLCDLNGGRALARGDSESLTIIFDVTQLSGQSLTIEAAVSSAGMDQNPKDNTMSTTISLREYAEIDASGGPIDGHIALKEYPYSAEVNNSYEFKSHGPSIIDELTVYVDVPIAYTVTGSAGIKSIFNISSLQMQATHGSELVPIKLYDQTNTLAKEYPLEDSSRRANRKRRELQQDQYAIMPDVNISDILTKENLPANRTLVLDCLRGNWTICVRSQMRVQLKPEQPIDLRISFKVDLNDFVNTFDYLVIFTNVEMFKEGDSTSIALKRNLKPNVIFNYSETPLPIWYIILSLIAGHLLLGAMTYILYKLRFFKRGKKEELKRLLEEHRSETKEPATDCEGNQEEINVEMHSDLEN.

FG-GAP repeat units lie at residues 15–74, 75–137, 145–198, 199–261, 262–323, 324–379, and 386–448; these read KHLK…GSCS, HYVL…DTPP, SLIP…AAQG, SYAV…GEIV, RKLH…FKFE, KKII…GLRD, and DAPS…SESR. N-linked (GlcNAc...) asparagine glycosylation is present at Asn-58. N-linked (GlcNAc...) asparagine glycosylation occurs at Asn-231. N-linked (GlcNAc...) asparagine glycans are attached at residues Asn-516, Asn-592, Asn-622, Asn-732, Asn-771, Asn-829, Asn-842, Asn-853, and Asn-922. A helical membrane pass occupies residues 930–950; sequence IWYIILSLIAGHLLLGAMTYI. Over 951–1000 the chain is Cytoplasmic; it reads LYKLRFFKRGKKEELKRLLEEHRSETKEPATDCEGNQEEINVEMHSDLEN. The segment covering 971-980 has biased composition (basic and acidic residues); it reads EHRSETKEPA. Positions 971–1000 are disordered; the sequence is EHRSETKEPATDCEGNQEEINVEMHSDLEN.

This sequence belongs to the integrin alpha chain family. Heterodimer of an alpha and a beta subunit. Alpha-PS5 associates with beta-PS. Expressed in all follicle cells overlying the oocyte during mid-oogenesis, the strongest expression is observed in the cells covering the anterior end of the oocyte and in the cells forming the dorsal appendages. After completion of oocyte enlargement, expression in main body follicle cells is down-regulated but persists strongly in the dorsal appendage forming cells. Expressed in lamellocytes.

It is found in the membrane. Its function is as follows. Possible role in cell-cell interactions. Minor involvement in the establishment of the oocyte anterior-posterior length. The polypeptide is Integrin alpha-PS5 (Drosophila melanogaster (Fruit fly)).